The chain runs to 176 residues: COA8 family protein CG14806, mitochondrial (176 aa).

The transit peptide at 1 to 23 (MNKCFRCQPRISLFQFSLPRCYA) directs the protein to the mitochondrion.

Belongs to the COA8 family.

The protein localises to the mitochondrion inner membrane. Functionally, may be required for cytochrome c complex (COX) assembly and function, COX being the terminal component of the mitochondrial respiratory chain. (Microbial infection) Required for optimal replication of E.chaffeensis. The sequence is that of COA8 family protein CG14806, mitochondrial from Drosophila melanogaster (Fruit fly).